The following is a 343-amino-acid chain: Phosphate acyltransferase (343 aa).

It belongs to the PlsX family. As to quaternary structure, homodimer. Probably interacts with PlsY.

The protein resides in the cytoplasm. It catalyses the reaction a fatty acyl-[ACP] + phosphate = an acyl phosphate + holo-[ACP]. It participates in lipid metabolism; phospholipid metabolism. In terms of biological role, catalyzes the reversible formation of acyl-phosphate (acyl-PO(4)) from acyl-[acyl-carrier-protein] (acyl-ACP). This enzyme utilizes acyl-ACP as fatty acyl donor, but not acyl-CoA. The polypeptide is Phosphate acyltransferase (Coxiella burnetii (strain Dugway 5J108-111)).